Consider the following 118-residue polypeptide: uncharacterized protein (118 aa).

The next 3 membrane-spanning stretches (helical) occupy residues 17–37 (IIII…FAIL), 60–80 (INYT…IMIF), and 90–110 (YIEQ…GSFW).

It localises to the membrane. This is an uncharacterized protein from Acanthamoeba polyphaga mimivirus (APMV).